The following is a 65-amino-acid chain: uncharacterized protein (65 aa).

This is an uncharacterized protein from Vaccinia virus (strain Copenhagen) (VACV).